The sequence spans 242 residues: Sugar fermentation stimulation protein homolog (242 aa).

It belongs to the SfsA family.

The protein is Sugar fermentation stimulation protein homolog of Rippkaea orientalis (strain PCC 8801 / RF-1) (Cyanothece sp. (strain PCC 8801)).